A 280-amino-acid chain; its full sequence is 4-diphosphocytidyl-2-C-methyl-D-erythritol kinase (280 aa).

Lysine 11 is an active-site residue. 95 to 105 (PVGAGLGGGSS) is a binding site for ATP. The active site involves aspartate 137.

It belongs to the GHMP kinase family. IspE subfamily.

The enzyme catalyses 4-CDP-2-C-methyl-D-erythritol + ATP = 4-CDP-2-C-methyl-D-erythritol 2-phosphate + ADP + H(+). It participates in isoprenoid biosynthesis; isopentenyl diphosphate biosynthesis via DXP pathway; isopentenyl diphosphate from 1-deoxy-D-xylulose 5-phosphate: step 3/6. Catalyzes the phosphorylation of the position 2 hydroxy group of 4-diphosphocytidyl-2C-methyl-D-erythritol. This is 4-diphosphocytidyl-2-C-methyl-D-erythritol kinase from Citrifermentans bemidjiense (strain ATCC BAA-1014 / DSM 16622 / JCM 12645 / Bem) (Geobacter bemidjiensis).